The following is a 431-amino-acid chain: Probable sodium/metabolite cotransporter BASS3, chloroplastic (431 aa).

A chloroplast-targeting transit peptide spans 1–70 (MTLIASLSLP…RRNSGLVPVV (70 aa)). 9 consecutive transmembrane segments (helical) span residues 110 to 130 (FWSALLPFVVALTAVAALSYP), 145 to 165 (LGGIMLSIGIQLSVDDFALAF), 169 to 189 (VPLSVGFVAQYVLKPLLGVLV), 198 to 218 (TFYAGFILTCCVAGAQLSSYA), 238 to 258 (IASVIFTPLLSGLLIGSVVPV), 261 to 281 (VAMSKSILQVVLVPITLGLVL), 288 to 308 (VVTLLQPVMPFVAMVCTSLCI), 325 to 345 (LGLIVPIVTFHAVAFALGYWF), and 387 to 407 (VPAACSVVVMAIMGLCLASFW).

It belongs to the bile acid:sodium symporter (BASS) (TC 2.A.28) family.

It is found in the membrane. The protein resides in the plastid. The protein localises to the chloroplast envelope. Functionally, may function as sodium-coupled metabolite transporter across the chloroplast envelope. The chain is Probable sodium/metabolite cotransporter BASS3, chloroplastic (BASS3) from Arabidopsis thaliana (Mouse-ear cress).